Consider the following 537-residue polypeptide: MEISTALMILSAITAYFLWLTFISRCLKGPRVWPILGSLPGLIENCERMHDWISDNLRACSGTYQTCICAIPFLAKKQGLVTVTCDPRNLEHILKNRFDNYPKGPTWQAVFHDLLGQGIFNSDGDTWLFQRKTAALEFTTRTLRQAMARWVNRAIKLRFLPILENARLGSEPIDLQDLLLRLTFDNICGLTFGKDPRTCAPGLPVNTFAVAFDRATEASLQRFILPEILWKFKRWLRLGLEVSLTRSLVQVDNYLSEIITTRKEEMMTQHNNGKHHDDLLSRFIKKKESYSDETLQRVALNFILAGRDTSSVALSWFFWLITQHPAIEDKILREICTVLVETRGDDVALWTDEPLSCEELDRLVFLKAALSETLRLYPSVPEDSKRAVKDDVLPDGTFVPAGSSITYSIYSAGRMKSTWGEDCLEFKPERWISQSDGGRFINHDPFKFVAFNAGPRICLGKDLAYLQMKSIASAVLLRHRLTVVTGHKVEQKMSLTLFMKYGLLVNVHERDLTAIAADLRECKSNVVNDGVGNGVSS.

A helical transmembrane segment spans residues 3-23 (ISTALMILSAITAYFLWLTFI). Heme is bound at residue Cys-458.

This sequence belongs to the cytochrome P450 family. Requires heme as cofactor. Expressed in leaves, stems, flowers and siliques. Expressed at low levels in roots.

The protein localises to the membrane. The catalysed reaction is an organic molecule + reduced [NADPH--hemoprotein reductase] + O2 = an alcohol + oxidized [NADPH--hemoprotein reductase] + H2O + H(+). Functionally, catalyzes the omega-hydroxylation of various fatty acids (FA). Acts on saturated and unsaturated fatty acids with chain lengths from C12 to C18. May be involved in the biosynthesis of cutin in the epidermis which prevents post-genital organ fusions. Hydroxylated FAs may be important for trichome differentiation, establishment of apical dominance and senescence. The polypeptide is Cytochrome P450 86A8 (CYP86A8) (Arabidopsis thaliana (Mouse-ear cress)).